The sequence spans 224 residues: Ribonuclease 3 (224 aa).

Positions 4–127 (YSKLEKCLDY…IMGAIYLESG (124 aa)) constitute an RNase III domain. Glu40 contacts Mg(2+). Asp44 is an active-site residue. Residues Asp113 and Glu116 each contribute to the Mg(2+) site. Residue Glu116 is part of the active site. In terms of domain architecture, DRBM spans 154–223 (DYKTALQEIT…AKIAIDKLKE (70 aa)).

Belongs to the ribonuclease III family. In terms of assembly, homodimer. Mg(2+) serves as cofactor.

It localises to the cytoplasm. The enzyme catalyses Endonucleolytic cleavage to 5'-phosphomonoester.. In terms of biological role, digests double-stranded RNA. Involved in the processing of primary rRNA transcript to yield the immediate precursors to the large and small rRNAs (23S and 16S). Processes some mRNAs, and tRNAs when they are encoded in the rRNA operon. Processes pre-crRNA and tracrRNA of type II CRISPR loci if present in the organism. This Aliarcobacter butzleri (strain RM4018) (Arcobacter butzleri) protein is Ribonuclease 3.